The primary structure comprises 507 residues: Histidine ammonia-lyase (507 aa).

Residues 141 to 143 (ASG) constitute a cross-link (5-imidazolinone (Ala-Gly)). Serine 142 is subject to 2,3-didehydroalanine (Ser).

The protein belongs to the PAL/histidase family. Contains an active site 4-methylidene-imidazol-5-one (MIO), which is formed autocatalytically by cyclization and dehydration of residues Ala-Ser-Gly.

The protein resides in the cytoplasm. It catalyses the reaction L-histidine = trans-urocanate + NH4(+). Its pathway is amino-acid degradation; L-histidine degradation into L-glutamate; N-formimidoyl-L-glutamate from L-histidine: step 1/3. The protein is Histidine ammonia-lyase of Burkholderia pseudomallei (strain 1106a).